We begin with the raw amino-acid sequence, 780 residues long: Elongation factor G-2, chloroplastic (780 aa).

The transit peptide at 1–79 directs the protein to the chloroplast; that stretch reads MAAESSLRVA…PRRNFSVFAM (79 aa). Residues 91-366 enclose the tr-type G domain; the sequence is KDYRNIGIMA…AVVDYLPSPL (276 aa). GTP contacts are provided by residues 100–107, 164–168, and 218–221; these read AHIDAGKT, DTPGH, and NKMD.

The protein belongs to the TRAFAC class translation factor GTPase superfamily. Classic translation factor GTPase family. EF-G/EF-2 subfamily.

It is found in the plastid. It localises to the chloroplast. It functions in the pathway protein biosynthesis; polypeptide chain elongation. Its function is as follows. Chloroplast-localized elongation factor EF-G involved in protein synthesis in plastids. Catalyzes the GTP-dependent ribosomal translocation step during translation elongation. During this step, the ribosome changes from the pre-translocational (PRE) to the post-translocational (POST) state as the newly formed A-site-bound peptidyl-tRNA and P-site-bound deacylated tRNA move to the P and E sites, respectively. Catalyzes the coordinated movement of the two tRNA molecules, the mRNA and conformational changes in the ribosome. This chain is Elongation factor G-2, chloroplastic (fusA2), found in Glycine max (Soybean).